A 323-amino-acid chain; its full sequence is Estradiol 17 beta-dehydrogenase 5 (323 aa).

NADP(+) contacts are provided by residues 20-24 (GFGTY) and Asp50. Residue Tyr55 is the Proton donor of the active site. His117 lines the substrate pocket. NADP(+)-binding positions include 166-167 (SN), Gln190, 216-221 (YSALGS), and 270-280 (KSFSEKRIKEN).

The protein belongs to the aldo/keto reductase family. As to quaternary structure, monomer. In terms of processing, three forms are detected, probably due to post-translational modifications. Mainly found in liver. Also expressed weakly in kidney.

Active toward androgens, estrogens, and xenobiotic substrates. Also exhibits low 20 alpha-HSD activity. Shows a-stereospecificity in hydrogen transfer between cofactors and substrates (A-specific). Preferentially catalyzes the reduction of 4-androstenedione, 5-alpha-androstane-3,17-dione, androsterone and dehydroepiandrosterone to testosterone, dihydrotestosterone, 5-alpha-androstane-3-alpha,17-beta-diol and 5-androstene-3-beta,17-beta-diol, respectively. The sequence is that of Estradiol 17 beta-dehydrogenase 5 (Akr1c6) from Mus musculus (Mouse).